The chain runs to 649 residues: Lipolysis-stimulated lipoprotein receptor (649 aa).

Positions 1–16 are enriched in gly residues; it reads MQQDGLGVGTRNGSGK. Residues 1–21 form a disordered region; that stretch reads MQQDGLGVGTRNGSGKGRSVH. The Extracellular portion of the chain corresponds to 1 to 259; it reads MQQDGLGVGT…PGFQAGPIED (259 aa). One can recognise an Ig-like V-type domain in the interval 86–234; the sequence is PARAIQVTVS…DLQGNNEAYA (149 aa). Cysteine 111 and cysteine 218 are joined by a disulfide. A helical membrane pass occupies residues 260–280; sequence WLFVVVVCLAAFLIFLLLGIC. The Cytoplasmic segment spans residues 281–649; that stretch reads WCQCCPHTCC…LALSRESLVV (369 aa). Threonine 336 is subject to Phosphothreonine. A phosphoserine mark is found at serine 365, serine 371, serine 389, serine 432, and serine 436. A disordered region spans residues 414–649; sequence NFDPSRPGPP…LALSRESLVV (236 aa). The segment covering 426 to 444 has biased composition (basic and acidic residues); it reads RVERAMSEVTSLHEDDWRS. Threonine 453 carries the phosphothreonine modification. Serine 464, serine 467, and serine 493 each carry phosphoserine. Threonine 501 bears the Phosphothreonine mark. Positions 502–518 are enriched in polar residues; that stretch reads PPSTAESGSRSPTSNGG. Serine 528 and serine 530 each carry phosphoserine. Positions 529–565 are enriched in basic and acidic residues; sequence RSRDDLYDQDDSRDFPRSRDPHYDDFRSRERPPADPR. Phosphotyrosine is present on tyrosine 535. Residues serine 540 and serine 579 each carry the phosphoserine modification. Residues 589–609 show a composition bias toward basic and acidic residues; it reads RLLEEAVRKKGSEERRRPHKE. Serine 631 bears the Phosphoserine mark. Lysine 638 participates in a covalent cross-link: Glycyl lysine isopeptide (Lys-Gly) (interchain with G-Cter in ubiquitin). Serine 643 and serine 646 each carry phosphoserine.

Belongs to the immunoglobulin superfamily. LISCH7 family. Homotrimer or homotetramer. Assembles into cell-cell contacts. Interacts (via the cytoplasmic domain) with MARVELD2 (via C-terminal cytoplasmic domain); the interaction is required to recruit MARVELD2 to tricellular contacts. Interacts with OCLN. Phosphorylation at Ser-365 by MAPK8/JNK1 and MAPK9/JNK2 may be required for exclusive localization at tricellular tight junstions. In terms of processing, polyubiquitinated at Lys-638 via 'Lys-63'-linked ubiquitin chains; deubiquitinated by USP53.

The protein localises to the cell membrane. Its subcellular location is the cell junction. The protein resides in the tight junction. Probable role in the clearance of triglyceride-rich lipoprotein from blood. Binds chylomicrons, LDL and VLDL in presence of free fatty acids and allows their subsequent uptake in the cells. Maintains epithelial barrier function by recruiting MARVELD2/tricellulin to tricellular tight junctions. The protein is Lipolysis-stimulated lipoprotein receptor of Homo sapiens (Human).